We begin with the raw amino-acid sequence, 51 residues long: Large ribosomal subunit protein bL33 (51 aa).

The protein belongs to the bacterial ribosomal protein bL33 family.

The chain is Large ribosomal subunit protein bL33 from Francisella tularensis subsp. tularensis (strain FSC 198).